Reading from the N-terminus, the 182-residue chain is Crossover junction endodeoxyribonuclease RuvC (182 aa).

Residues aspartate 7, glutamate 69, and aspartate 141 contribute to the active site. Mg(2+) contacts are provided by aspartate 7, glutamate 69, and aspartate 141.

This sequence belongs to the RuvC family. As to quaternary structure, homodimer which binds Holliday junction (HJ) DNA. The HJ becomes 2-fold symmetrical on binding to RuvC with unstacked arms; it has a different conformation from HJ DNA in complex with RuvA. In the full resolvosome a probable DNA-RuvA(4)-RuvB(12)-RuvC(2) complex forms which resolves the HJ. Mg(2+) is required as a cofactor.

It localises to the cytoplasm. It carries out the reaction Endonucleolytic cleavage at a junction such as a reciprocal single-stranded crossover between two homologous DNA duplexes (Holliday junction).. The RuvA-RuvB-RuvC complex processes Holliday junction (HJ) DNA during genetic recombination and DNA repair. Endonuclease that resolves HJ intermediates. Cleaves cruciform DNA by making single-stranded nicks across the HJ at symmetrical positions within the homologous arms, yielding a 5'-phosphate and a 3'-hydroxyl group; requires a central core of homology in the junction. The consensus cleavage sequence is 5'-(A/T)TT(C/G)-3'. Cleavage occurs on the 3'-side of the TT dinucleotide at the point of strand exchange. HJ branch migration catalyzed by RuvA-RuvB allows RuvC to scan DNA until it finds its consensus sequence, where it cleaves and resolves the cruciform DNA. The protein is Crossover junction endodeoxyribonuclease RuvC of Variovorax paradoxus (strain S110).